A 143-amino-acid chain; its full sequence is Dehydrin DHN2 (143 aa).

Over residues Met-1–Ala-10 the composition is skewed to polar residues. The disordered stretch occupies residues Met-1–His-143. Positions Gly-24–Gly-34 are enriched in gly residues. Positions Thr-35–Gly-46 are enriched in low complexity. Basic and acidic residues predominate over residues Thr-51–Leu-61. The span at Arg-62–Ser-71 shows a compositional bias: low complexity. The span at Lys-86–Ala-101 shows a compositional bias: basic and acidic residues. The span at Ala-109–Ala-123 shows a compositional bias: low complexity. Residues Thr-124–His-143 are compositionally biased toward basic and acidic residues.

It belongs to the plant dehydrin family.

The sequence is that of Dehydrin DHN2 (DHN2) from Hordeum vulgare (Barley).